The sequence spans 1193 residues: DNA-directed RNA polymerase subunit beta (1193 aa).

A disordered region spans residues 1173–1193 (QQAKEAAELEKAKEEALDKTE). A compositionally biased stretch (basic and acidic residues) spans 1177 to 1193 (EAAELEKAKEEALDKTE).

This sequence belongs to the RNA polymerase beta chain family. The RNAP catalytic core consists of 2 alpha, 1 beta, 1 beta' and 1 omega subunit. When a sigma factor is associated with the core the holoenzyme is formed, which can initiate transcription.

The enzyme catalyses RNA(n) + a ribonucleoside 5'-triphosphate = RNA(n+1) + diphosphate. Its function is as follows. DNA-dependent RNA polymerase catalyzes the transcription of DNA into RNA using the four ribonucleoside triphosphates as substrates. This is DNA-directed RNA polymerase subunit beta from Streptococcus thermophilus (strain CNRZ 1066).